The chain runs to 722 residues: Disintegrin and metalloproteinase domain-containing protein 21 (722 aa).

A signal peptide spans 1–31 (MAVDGTLVYIRVTLLLLWLGVFLSISGYCQA). A propeptide spanning residues 32-196 (GPSQHFTSPE…FEEAENSALE (165 aa)) is cleaved from the precursor. N-linked (GlcNAc...) asparagine glycosylation occurs at Asn-164. Positions 171 to 178 (MRCGLTEK) match the Cysteine switch motif. Cys-173 is a Zn(2+) binding site. Residues 197-681 (PKSAGDWWTH…DSGPASAKRG (485 aa)) lie on the Extracellular side of the membrane. Residues 208-398 (WFLELVVVVN…NQGSCLHNPP (191 aa)) form the Peptidase M12B domain. Asn-227 carries N-linked (GlcNAc...) asparagine glycosylation. 3 cysteine pairs are disulfide-bonded: Cys-316/Cys-393, Cys-356/Cys-378, and Cys-358/Cys-363. His-341 contributes to the Zn(2+) binding site. The active site involves Glu-342. Zn(2+)-binding residues include His-345 and His-351. 5 N-linked (GlcNAc...) asparagine glycosylation sites follow: Asn-377, Asn-437, Asn-478, Asn-546, and Asn-600. In terms of domain architecture, Disintegrin spans 406-492 (LKRCGNGVVE…QCPEDRYVQD (87 aa)). Cys-464 and Cys-484 are disulfide-bonded. Disulfide bonds link Cys-634-Cys-645, Cys-639-Cys-651, and Cys-653-Cys-662. The EGF-like domain occupies 634–663 (CLPETCNMKGICNNKHHCHCGYGWSPPYCQ). Residues 682–702 (VFLPLIVIPSLSVLTFLFTVG) form a helical membrane-spanning segment. Residues 703–722 (LLMYLRQCSGPKETKAHSSG) lie on the Cytoplasmic side of the membrane.

Requires Zn(2+) as cofactor. In terms of processing, has no obvious cleavage site for furin endopeptidase, suggesting that the proteolytic processing is regulated.

Its subcellular location is the membrane. Its function is as follows. May be involved in sperm maturation and/or fertilization. May also be involved in epithelia functions associated with establishing and maintaining gradients of ions or nutrients. This is Disintegrin and metalloproteinase domain-containing protein 21 (ADAM21) from Homo sapiens (Human).